Consider the following 319-residue polypeptide: Putative metal ion transporter YfjQ (319 aa).

The next 2 helical transmembrane spans lie at 254–274 (IMMT…IAGV) and 290–310 (GYFA…IWFV).

The protein belongs to the CorA metal ion transporter (MIT) (TC 1.A.35) family.

The protein localises to the cell membrane. The protein is Putative metal ion transporter YfjQ (yfjQ) of Bacillus subtilis (strain 168).